The primary structure comprises 275 residues: Large ribosomal subunit protein uL2 (275 aa).

The span at 38 to 53 shows a compositional bias: polar residues; that stretch reads NSKAGRNNNGRITTRH. 2 disordered regions span residues 38–59 and 224–257; these read NSKA…GGHK and AMNP…KGFR.

This sequence belongs to the universal ribosomal protein uL2 family. In terms of assembly, part of the 50S ribosomal subunit. Forms a bridge to the 30S subunit in the 70S ribosome.

Its function is as follows. One of the primary rRNA binding proteins. Required for association of the 30S and 50S subunits to form the 70S ribosome, for tRNA binding and peptide bond formation. It has been suggested to have peptidyltransferase activity; this is somewhat controversial. Makes several contacts with the 16S rRNA in the 70S ribosome. The chain is Large ribosomal subunit protein uL2 from Burkholderia thailandensis (strain ATCC 700388 / DSM 13276 / CCUG 48851 / CIP 106301 / E264).